The primary structure comprises 186 residues: MKLIVGLGNPGREYELTRHNIGFMAIDELAKRWNISLNEQKFKGLFGAGFVNGEKVILLKPLTYMNLSGESIRPLMDYYKIDVEDFVVLYDDLDIPVGKLRLRMKGSAGGHNGVKSTISHLGTQEFQRIRMGIDRPKNGMKVVDYVLGRFTSEEIPDVNHSIEKAADACEEWLNKPFLQIMNTFNS.

TRNA is bound at residue Tyr-14. Catalysis depends on His-19, which acts as the Proton acceptor. TRNA is bound by residues Tyr-64, Asn-66, and Asn-112.

Belongs to the PTH family. In terms of assembly, monomer.

The protein localises to the cytoplasm. It catalyses the reaction an N-acyl-L-alpha-aminoacyl-tRNA + H2O = an N-acyl-L-amino acid + a tRNA + H(+). Functionally, hydrolyzes ribosome-free peptidyl-tRNAs (with 1 or more amino acids incorporated), which drop off the ribosome during protein synthesis, or as a result of ribosome stalling. Catalyzes the release of premature peptidyl moieties from peptidyl-tRNA molecules trapped in stalled 50S ribosomal subunits, and thus maintains levels of free tRNAs and 50S ribosomes. In Bacillus anthracis, this protein is Peptidyl-tRNA hydrolase.